The following is a 495-amino-acid chain: Putative aldehyde dehydrogenase AldA (495 aa).

212-218 (GKGSESG) serves as a coordination point for NAD(+). Residues glutamate 256 and cysteine 290 contribute to the active site.

The protein belongs to the aldehyde dehydrogenase family.

The catalysed reaction is an aldehyde + NAD(+) + H2O = a carboxylate + NADH + 2 H(+). This Staphylococcus aureus (strain MSSA476) protein is Putative aldehyde dehydrogenase AldA (aldA).